We begin with the raw amino-acid sequence, 215 residues long: Pyrrolidone-carboxylate peptidase (215 aa).

Residues Glu80, Cys143, and His167 contribute to the active site.

This sequence belongs to the peptidase C15 family. Homotetramer.

It localises to the cytoplasm. The enzyme catalyses Release of an N-terminal pyroglutamyl group from a polypeptide, the second amino acid generally not being Pro.. In terms of biological role, removes 5-oxoproline from various penultimate amino acid residues except L-proline. This chain is Pyrrolidone-carboxylate peptidase, found in Bacillus cereus (strain ATCC 14579 / DSM 31 / CCUG 7414 / JCM 2152 / NBRC 15305 / NCIMB 9373 / NCTC 2599 / NRRL B-3711).